Reading from the N-terminus, the 478-residue chain is Growth/differentiation factor 10 (478 aa).

The signal sequence occupies residues 1–33 (MARGPARTSLGPGSQQLPLLSLLLLLLLRDADG). A disordered region spans residues 34–70 (SHTAAARPPPPAAADGLAGDKNPQRSPGDVAAAQSPG). Positions 34-368 (SHTAAARPPP…EKTMQKARKK (335 aa)) are excised as a propeptide. Residues Asn-118, Asn-155, and Asn-280 are each glycosylated (N-linked (GlcNAc...) asparagine). The segment at 267 to 345 (PFQAGDPEPG…GRKDRRKKGQ (79 aa)) is disordered. The segment covering 291–301 (TQATGPLQNNE) has biased composition (polar residues). The segment covering 331 to 343 (LKPRPGRKDRRKK) has biased composition (basic residues). 3 cysteine pairs are disulfide-bonded: Cys-376/Cys-443, Cys-405/Cys-475, and Cys-409/Cys-477. An N-linked (GlcNAc...) asparagine glycan is attached at Asn-469.

It belongs to the TGF-beta family. As to quaternary structure, homodimer or heterodimer. Can form a non-covalent complex of the mature region and the pro-region.

It is found in the secreted. In terms of biological role, growth factor involved in osteogenesis and adipogenesis. Plays an inhibitory role in the process of osteoblast differentiation via SMAD2/3 pathway. Plays an inhibitory role in the process of adipogenesis. This is Growth/differentiation factor 10 (GDF10) from Bos taurus (Bovine).